Reading from the N-terminus, the 1876-residue chain is 1,3-beta-glucan synthase component FKS1 (1876 aa).

2 stretches are compositionally biased toward polar residues: residues 1 to 25 (MNTD…QSQE) and 60 to 71 (QPPNESYDQDYT). The segment at 1–108 (MNTDQQPYQG…PGTPGYDSYG (108 aa)) is disordered. At 1–454 (MNTDQQPYQG…WLHLVTNFNR (454 aa)) the chain is on the cytoplasmic side. Residue Lys259 forms a Glycyl lysine isopeptide (Lys-Gly) (interchain with G-Cter in ubiquitin) linkage. Phosphothreonine occurs at positions 269 and 272. Residues Lys275 and Lys386 each participate in a glycyl lysine isopeptide (Lys-Gly) (interchain with G-Cter in ubiquitin) cross-link. A helical membrane pass occupies residues 455 to 475 (IWVMHISIFWMYFAYNSPTFY). Topologically, residues 476–492 (THNYQQLVDNQPLAAYK) are extracellular. The chain crosses the membrane as a helical span at residues 493 to 513 (WASCALGGTVASLIQIVATLC). At 514-531 (EWSFVPRKWAGAQHLSRR) the chain is on the cytoplasmic side. A helical membrane pass occupies residues 532-552 (FWFLCIIFGINLGPIIFVFAY). The Extracellular portion of the chain corresponds to 553 to 563 (DKDTVYSTAAH). Residues 564–584 (VVAAVMFFVAVATIIFFSIMP) traverse the membrane as a helical segment. Topologically, residues 585–621 (LGGLFTSYMKKSTRRYVASQTFTAAFAPLHGLDRWMS) are cytoplasmic. A helical membrane pass occupies residues 622–642 (YLVWVTVFAAKYSESYYFLVL). The Extracellular portion of the chain corresponds to 643 to 678 (SLRDPIRILSTTAMRCTGEYWWGAVLCKVQPKIVLG). The helical transmembrane segment at 679–699 (LVIATDFILFFLDTYLWYIIV) threads the bilayer. Over 700-1358 (NTIFSVGKSF…QPAVDWVRRY (659 aa)) the chain is Cytoplasmic. Residues Lys910 and Lys915 each participate in a glycyl lysine isopeptide (Lys-Gly) (interchain with G-Cter in ubiquitin) cross-link. The helical transmembrane segment at 1359 to 1379 (TLSIFIVFWIAFVPIVVQELI) threads the bilayer. Residues 1380 to 1444 (ERGLWKATQR…RIPFSILYSR (65 aa)) are Extracellular-facing. Residues 1445–1465 (FAGSAIYMGARSMLMLLFGTV) form a helical membrane-spanning segment. The Cytoplasmic portion of the chain corresponds to 1466-1469 (AHWQ). A helical membrane pass occupies residues 1470–1490 (APLLWFWASLSSLIFAPFVFN). Residues 1491-1560 (PHQFAWEDFF…DASRAHRTNL (70 aa)) are Extracellular-facing. Residues Lys1539 and Lys1547 each participate in a glycyl lysine isopeptide (Lys-Gly) (interchain with G-Cter in ubiquitin) cross-link. The helical transmembrane segment at 1561-1581 (IMAEIIPCAIYAAGCFIAFTF) threads the bilayer. Topologically, residues 1582–1601 (INAQTGVKTTDDDRVNSVLR) are cytoplasmic. Residues 1602-1622 (IIICTLAPIAVNLGVLFFCMG) traverse the membrane as a helical segment. The Extracellular portion of the chain corresponds to 1623–1643 (MSCCSGPLFGMCCKKTGSVMA). The chain crosses the membrane as a helical span at residues 1644–1664 (GIAHGVAVIVHIAFFIVMWVL). Residues 1665-1672 (ESFNFVRM) are Cytoplasmic-facing. A helical transmembrane segment spans residues 1673 to 1695 (LIGVVTCIQCQRLIFHCMTALML). Topologically, residues 1696-1802 (TREFKNDHAN…RKRMVKKYCS (107 aa)) are extracellular. A helical membrane pass occupies residues 1803-1823 (LYFLVLAIFAGCIIGPAVASA). The Cytoplasmic portion of the chain corresponds to 1824–1876 (KIHKHIGDSLDGVVHNLFQPINTTNNDTGSQMSTYQSHYYTHTPSLKTWSTIK).

This sequence belongs to the glycosyltransferase 48 family. As to quaternary structure, component of the 1,3-beta-glucan synthase (GS) complex, composed of two alternate catalytic subunits FKS1 or GSC2, and a regulatory subunit RHO1. Interacts with RHO1, which is a GTP-binding protein.

The protein resides in the mitochondrion. Its subcellular location is the cell membrane. It catalyses the reaction [(1-&gt;3)-beta-D-glucosyl](n) + UDP-alpha-D-glucose = [(1-&gt;3)-beta-D-glucosyl](n+1) + UDP + H(+). In terms of biological role, alternate catalytic subunit of the 1,3-beta-glucan synthase (GS) complex. Synthesizes 1,3-beta-glucan, a major structural component of the yeast cell wall. Involved in cell wall synthesis, maintenance and remodeling. In Saccharomyces cerevisiae (strain ATCC 204508 / S288c) (Baker's yeast), this protein is 1,3-beta-glucan synthase component FKS1 (FKS1).